The chain runs to 1370 residues: Insulin-like growth factor 1 receptor (1370 aa).

Residues 1 to 30 (MKSGSGGGSPTSLWGLVFLSAALSLWPTSG) form the signal peptide. Residues cysteine 33 and cysteine 52 are joined by a disulfide bond. 3 N-linked (GlcNAc...) asparagine glycosylation sites follow: asparagine 51, asparagine 102, and asparagine 135. Cystine bridges form between cysteine 150-cysteine 178, cysteine 182-cysteine 205, cysteine 192-cysteine 211, cysteine 215-cysteine 224, cysteine 219-cysteine 230, cysteine 231-cysteine 239, cysteine 235-cysteine 248, cysteine 251-cysteine 260, cysteine 264-cysteine 276, cysteine 282-cysteine 303, cysteine 307-cysteine 321, cysteine 324-cysteine 328, and cysteine 332-cysteine 354. A glycan (N-linked (GlcNAc...) asparagine) is linked at asparagine 245. Asparagine 314 carries N-linked (GlcNAc...) asparagine glycosylation. Residues asparagine 418 and asparagine 439 are each glycosylated (N-linked (GlcNAc...) asparagine). Residues cysteine 456 and cysteine 489 are joined by a disulfide bond. Fibronectin type-III domains are found at residues 490-610 (ESDV…TNAS) and 611-709 (VPSI…TEAE). N-linked (GlcNAc...) asparagine glycosylation is found at asparagine 535, asparagine 608, asparagine 623, asparagine 641, asparagine 748, asparagine 757, asparagine 765, asparagine 901, and asparagine 914. Over 742–936 (DVLQVANTTM…AKTTYENFMH (195 aa)) the chain is Extracellular. Residues 835–928 (IPGPVTWEPR…DPVFFYVPAK (94 aa)) enclose the Fibronectin type-III 3 domain. A helical transmembrane segment spans residues 937-960 (LIIALPVAILLIVGGLVIMLYVFH). The Cytoplasmic segment spans residues 961–1370 (RKRNNSRLGN…ALPLPQSSTC (410 aa)). The IRS1- and SHC1-binding signature appears at 978-981 (NPEY). A Phosphotyrosine modification is found at tyrosine 981. The Protein kinase domain occupies 1000–1275 (ITMNRELGQG…SIKDEMEPSF (276 aa)). ATP contacts are provided by residues 1006–1014 (LGQGSFGMV) and lysine 1034. The active-site Proton acceptor is the aspartate 1136. Residues tyrosine 1162, tyrosine 1166, and tyrosine 1167 each carry the phosphotyrosine; by autocatalysis modification. Residues lysine 1169 and lysine 1172 each participate in a glycyl lysine isopeptide (Lys-Gly) (interchain with G-Cter in ubiquitin) cross-link. Serine 1279 carries the phosphoserine; by GSK3-beta modification. Position 1283 is a phosphoserine (serine 1283). Residues 1304–1370 (NMESVPLDPS…ALPLPQSSTC (67 aa)) are disordered. Low complexity predominate over residues 1305-1321 (MESVPLDPSASSASLPL). The span at 1322 to 1331 (PERHSGHKAE) shows a compositional bias: basic and acidic residues.

Belongs to the protein kinase superfamily. Tyr protein kinase family. Insulin receptor subfamily. Tetramer of 2 alpha and 2 beta chains linked by disulfide bonds. The alpha chains contribute to the formation of the ligand-binding domain, while the beta chain carries the kinase domain. Interacts with PIK3R1 and with the PTB/PID domains of IRS1 and SHC1 in vitro when autophosphorylated on tyrosine residues. Forms a hybrid receptor with INSR, the hybrid is a tetramer consisting of 1 alpha chain and 1 beta chain of INSR and 1 alpha chain and 1 beta chain of IGF1R. Interacts with ARRB1 and ARRB2. Interacts with GRB10. Interacts with RACK1. Interacts with SOCS1, SOCS2 and SOCS3. Interacts with 14-3-3 proteins. Interacts with NMD2. Interacts with MAP3K5. Interacts with STAT3. Found in a ternary complex with IGF1 and ITGAV:ITGB3 or ITGA6:ITGB4. Interacts (nascent precursor form) with ZFAND2B. In terms of processing, autophosphorylated on tyrosine residues in response to ligand binding. Autophosphorylation occurs in trans, i.e. one subunit of the dimeric receptor phosphorylates tyrosine residues on the other subunit. Autophosphorylation occurs in a sequential manner; Tyr-1166 is predominantly phosphorylated first, followed by phosphorylation of Tyr-1162 and Tyr-1167. While every single phosphorylation increases kinase activity, all three tyrosine residues in the kinase activation loop (Tyr-1162, Tyr-1166 and Tyr-1167) have to be phosphorylated for optimal activity. Can be autophosphorylated at additional tyrosine residues (in vitro). Autophosphorylated is followed by phosphorylation of juxtamembrane tyrosines and C-terminal serines. May also be phosphorylated at Tyr-1162 and Tyr-1167 by mTORC2. Phosphorylation of Tyr-981 is required for IRS1- and SHC1-binding. Phosphorylation of Ser-1279 by GSK-3beta restrains kinase activity and promotes cell surface expression, it requires a priming phosphorylation at Ser-1283. Dephosphorylated by PTPN1. Post-translationally, polyubiquitinated at Lys-1169 and Lys-1172 through both 'Lys-48' and 'Lys-29' linkages, promoting receptor endocytosis and subsequent degradation by the proteasome. Ubiquitination is facilitated by pre-existing phosphorylation. Sumoylated with SUMO1. In terms of processing, controlled by regulated intramembrane proteolysis (RIP). Undergoes metalloprotease-dependent constitutive ectodomain shedding to produce a membrane-anchored 52 kDa C-Terminal fragment which is further processed by presenilin gamma-secretase to yield an intracellular 50 kDa fragment.

Its subcellular location is the cell membrane. The enzyme catalyses L-tyrosyl-[protein] + ATP = O-phospho-L-tyrosyl-[protein] + ADP + H(+). Its activity is regulated as follows. Activated by autophosphorylation at Tyr-1162, Tyr-1166 and Tyr-1167 on the kinase activation loop; phosphorylation at all three tyrosine residues is required for optimal kinase activity. Inhibited by MSC1609119A-1, BMS-754807, PQIP, benzimidazole pyridinone, isoquinolinedione, bis-azaindole, 3-cyanoquinoline, 2,4-bis-arylamino-1,3-pyrimidine, pyrrolopyrimidine, pyrrole-5-carboxaldehyde, picropodophyllin (PPP), tyrphostin derivatives. While most inhibitors bind to the ATP binding pocket, MSC1609119A-1 functions as allosteric inhibitor and binds close to the DFG motif and the activation loop. Dephosphorylated by PTPN1. Receptor tyrosine kinase which mediates actions of insulin-like growth factor 1 (IGF1). Binds IGF1 with high affinity and IGF2 and insulin (INS) with a lower affinity. The activated IGF1R is involved in cell growth and survival control. IGF1R is crucial for tumor transformation and survival of malignant cell. Ligand binding activates the receptor kinase, leading to receptor autophosphorylation, and tyrosines phosphorylation of multiple substrates, that function as signaling adapter proteins including, the insulin-receptor substrates (IRS1/2), Shc and 14-3-3 proteins. Phosphorylation of IRSs proteins lead to the activation of two main signaling pathways: the PI3K-AKT/PKB pathway and the Ras-MAPK pathway. The result of activating the MAPK pathway is increased cellular proliferation, whereas activating the PI3K pathway inhibits apoptosis and stimulates protein synthesis. Phosphorylated IRS1 can activate the 85 kDa regulatory subunit of PI3K (PIK3R1), leading to activation of several downstream substrates, including protein AKT/PKB. AKT phosphorylation, in turn, enhances protein synthesis through mTOR activation and triggers the antiapoptotic effects of IGFIR through phosphorylation and inactivation of BAD. In parallel to PI3K-driven signaling, recruitment of Grb2/SOS by phosphorylated IRS1 or Shc leads to recruitment of Ras and activation of the ras-MAPK pathway. In addition to these two main signaling pathways IGF1R signals also through the Janus kinase/signal transducer and activator of transcription pathway (JAK/STAT). Phosphorylation of JAK proteins can lead to phosphorylation/activation of signal transducers and activators of transcription (STAT) proteins. In particular activation of STAT3, may be essential for the transforming activity of IGF1R. The JAK/STAT pathway activates gene transcription and may be responsible for the transforming activity. JNK kinases can also be activated by the IGF1R. IGF1 exerts inhibiting activities on JNK activation via phosphorylation and inhibition of MAP3K5/ASK1, which is able to directly associate with the IGF1R. When present in a hybrid receptor with INSR, binds IGF1. The polypeptide is Insulin-like growth factor 1 receptor (Igf1r) (Rattus norvegicus (Rat)).